Here is a 197-residue protein sequence, read N- to C-terminus: Probable GTP-binding protein EngB (197 aa).

The EngB-type G domain maps to 25–197 (SAPEIAFAGR…VRDEFFKFTR (173 aa)). GTP contacts are provided by residues 33-40 (GRSNVGKS), 60-64 (GCTRQ), 79-82 (DLPG), 146-149 (TKID), and 177-179 (MSI). Residues Ser-40 and Thr-62 each coordinate Mg(2+).

The protein belongs to the TRAFAC class TrmE-Era-EngA-EngB-Septin-like GTPase superfamily. EngB GTPase family. Requires Mg(2+) as cofactor.

Functionally, necessary for normal cell division and for the maintenance of normal septation. The protein is Probable GTP-binding protein EngB of Wolbachia pipientis wMel.